Consider the following 556-residue polypeptide: Formate--tetrahydrofolate ligase (556 aa).

64 to 71 (TPAGEGKT) serves as a coordination point for ATP.

It belongs to the formate--tetrahydrofolate ligase family.

The enzyme catalyses (6S)-5,6,7,8-tetrahydrofolate + formate + ATP = (6R)-10-formyltetrahydrofolate + ADP + phosphate. It participates in one-carbon metabolism; tetrahydrofolate interconversion. This chain is Formate--tetrahydrofolate ligase, found in Actinobacillus pleuropneumoniae serotype 5b (strain L20).